Consider the following 391-residue polypeptide: Ferrochelatase (391 aa).

Fe cation is bound by residues histidine 196 and glutamate 281.

It belongs to the ferrochelatase family.

It localises to the cytoplasm. It carries out the reaction heme b + 2 H(+) = protoporphyrin IX + Fe(2+). The protein operates within porphyrin-containing compound metabolism; protoheme biosynthesis; protoheme from protoporphyrin-IX: step 1/1. In terms of biological role, catalyzes the ferrous insertion into protoporphyrin IX. The chain is Ferrochelatase from Prochlorococcus marinus (strain AS9601).